A 198-amino-acid chain; its full sequence is Ribonuclease HII (198 aa).

The RNase H type-2 domain maps to 10–198; it reads HLVAGVDEVG…PVKRALELAS (189 aa). Positions 16, 17, and 108 each coordinate a divalent metal cation.

It belongs to the RNase HII family. Mn(2+) is required as a cofactor. Requires Mg(2+) as cofactor.

Its subcellular location is the cytoplasm. It catalyses the reaction Endonucleolytic cleavage to 5'-phosphomonoester.. Endonuclease that specifically degrades the RNA of RNA-DNA hybrids. This Salmonella arizonae (strain ATCC BAA-731 / CDC346-86 / RSK2980) protein is Ribonuclease HII.